A 938-amino-acid polypeptide reads, in one-letter code: Isoleucine--tRNA ligase (938 aa).

Positions 58 to 68 (PYANGSIHIGH) match the 'HIGH' region motif. Lysine 183 carries the N6-acetyllysine modification. Residue glutamate 561 participates in L-isoleucyl-5'-AMP binding. Positions 602-606 (KMSKS) match the 'KMSKS' region motif. Lysine 605 lines the ATP pocket. Residues cysteine 901, cysteine 904, cysteine 921, and cysteine 924 each coordinate Zn(2+).

Belongs to the class-I aminoacyl-tRNA synthetase family. IleS type 1 subfamily. In terms of assembly, monomer. Zn(2+) is required as a cofactor.

It is found in the cytoplasm. The catalysed reaction is tRNA(Ile) + L-isoleucine + ATP = L-isoleucyl-tRNA(Ile) + AMP + diphosphate. In terms of biological role, catalyzes the attachment of isoleucine to tRNA(Ile). As IleRS can inadvertently accommodate and process structurally similar amino acids such as valine, to avoid such errors it has two additional distinct tRNA(Ile)-dependent editing activities. One activity is designated as 'pretransfer' editing and involves the hydrolysis of activated Val-AMP. The other activity is designated 'posttransfer' editing and involves deacylation of mischarged Val-tRNA(Ile). In Escherichia coli O6:K15:H31 (strain 536 / UPEC), this protein is Isoleucine--tRNA ligase.